Reading from the N-terminus, the 210-residue chain is Replication protein RepB (210 aa).

It belongs to the Gram-positive plasmids replication protein type 2 family.

Its function is as follows. Is essential for plasmid replication. Nicks the positive strand at the plus origin of replication. This Streptococcus agalactiae protein is Replication protein RepB (repB).